The chain runs to 157 residues: Putative tRNA (cytidine(34)-2'-O)-methyltransferase (157 aa).

3 residues coordinate S-adenosyl-L-methionine: Ile-79, Gly-104, and Ile-125.

It belongs to the class IV-like SAM-binding methyltransferase superfamily. RNA methyltransferase TrmH family. TrmL subfamily.

It is found in the cytoplasm. The catalysed reaction is cytidine(34) in tRNA + S-adenosyl-L-methionine = 2'-O-methylcytidine(34) in tRNA + S-adenosyl-L-homocysteine + H(+). It catalyses the reaction 5-carboxymethylaminomethyluridine(34) in tRNA(Leu) + S-adenosyl-L-methionine = 5-carboxymethylaminomethyl-2'-O-methyluridine(34) in tRNA(Leu) + S-adenosyl-L-homocysteine + H(+). In terms of biological role, could methylate the ribose at the nucleotide 34 wobble position in tRNA. The protein is Putative tRNA (cytidine(34)-2'-O)-methyltransferase of Geobacillus stearothermophilus (Bacillus stearothermophilus).